The chain runs to 112 residues: Probable 4-amino-4-deoxy-L-arabinose-phosphoundecaprenol flippase subunit ArnE (112 aa).

Residues 35 to 110 (RHILFWLGMA…IVVGIVILGT (76 aa)) enclose the EamA domain. Helical transmembrane passes span 37 to 57 (ILFW…LWLS), 66 to 86 (IAYP…WGIW), and 89 to 109 (PVAR…VILG).

Belongs to the ArnE family. In terms of assembly, heterodimer of ArnE and ArnF.

Its subcellular location is the cell inner membrane. Its pathway is bacterial outer membrane biogenesis; lipopolysaccharide biosynthesis. In terms of biological role, translocates 4-amino-4-deoxy-L-arabinose-phosphoundecaprenol (alpha-L-Ara4N-phosphoundecaprenol) from the cytoplasmic to the periplasmic side of the inner membrane. The protein is Probable 4-amino-4-deoxy-L-arabinose-phosphoundecaprenol flippase subunit ArnE of Klebsiella pneumoniae (strain 342).